The following is a 509-amino-acid chain: 2,3-bisphosphoglycerate-independent phosphoglycerate mutase (509 aa).

Mn(2+) is bound by residues aspartate 14 and serine 64. Serine 64 functions as the Phosphoserine intermediate in the catalytic mechanism. Substrate is bound by residues histidine 125, 155–156, arginine 187, arginine 193, 259–262, and lysine 332; these read RD and RADR. Residues aspartate 399, histidine 403, aspartate 440, histidine 441, and histidine 459 each coordinate Mn(2+).

This sequence belongs to the BPG-independent phosphoglycerate mutase family. In terms of assembly, monomer. The cofactor is Mn(2+).

The enzyme catalyses (2R)-2-phosphoglycerate = (2R)-3-phosphoglycerate. Its pathway is carbohydrate degradation; glycolysis; pyruvate from D-glyceraldehyde 3-phosphate: step 3/5. Catalyzes the interconversion of 2-phosphoglycerate and 3-phosphoglycerate. This is 2,3-bisphosphoglycerate-independent phosphoglycerate mutase from Psychromonas ingrahamii (strain DSM 17664 / CCUG 51855 / 37).